Reading from the N-terminus, the 183-residue chain is uncharacterized protein (183 aa).

This sequence belongs to the herpesviridae US1 family.

This is an uncharacterized protein from Human cytomegalovirus (strain AD169) (HHV-5).